A 458-amino-acid polypeptide reads, in one-letter code: Argininosuccinate lyase (458 aa).

It belongs to the lyase 1 family. Argininosuccinate lyase subfamily.

It localises to the cytoplasm. It catalyses the reaction 2-(N(omega)-L-arginino)succinate = fumarate + L-arginine. The protein operates within amino-acid biosynthesis; L-arginine biosynthesis; L-arginine from L-ornithine and carbamoyl phosphate: step 3/3. The chain is Argininosuccinate lyase from Bacillus velezensis (strain DSM 23117 / BGSC 10A6 / LMG 26770 / FZB42) (Bacillus amyloliquefaciens subsp. plantarum).